We begin with the raw amino-acid sequence, 151 residues long: Deoxyuridine 5'-triphosphate nucleotidohydrolase (151 aa).

Substrate contacts are provided by residues 70–72 (RSG), N83, 87–89 (LID), and M97.

It belongs to the dUTPase family. The cofactor is Mg(2+).

The enzyme catalyses dUTP + H2O = dUMP + diphosphate + H(+). The protein operates within pyrimidine metabolism; dUMP biosynthesis; dUMP from dCTP (dUTP route): step 2/2. In terms of biological role, this enzyme is involved in nucleotide metabolism: it produces dUMP, the immediate precursor of thymidine nucleotides and it decreases the intracellular concentration of dUTP so that uracil cannot be incorporated into DNA. The sequence is that of Deoxyuridine 5'-triphosphate nucleotidohydrolase from Salmonella enteritidis PT4 (strain P125109).